We begin with the raw amino-acid sequence, 693 residues long: MSDRKYPLERVRNIGIIAHIDAGKTTTTERILYLTKRTHKIGNIDDGTTVMDWMEQEKARGITITSVATSAYWNGHHLNVIDTPGHVDFTVEVERSLRVLDGGVVVFDGVAGVEAQSETVWRQASRYGVPRICFINKMDRTGANYERTLGMITQRLKAKCLPLQIPIGCAETFRGSCDLLDFQCYGMDNSPEEPAETFDLPDADKERAVKFRNTMIERLAEEDDEVMEAYLAGEELPVEKLKAAIRRVCLANKAIPIFCGTSLRNKGVKRLLDAVCDYLPSPVDIPAIKGTAPKTGEPMERHASDTEPFSALAFKIVSDPFVGRLVYFRIYSGNVSAGSGVYNSTRGERERIGRLIRMHANDREEIEYADAGEIVASLGLRNTFTGDTLCDQSAPILLESIKFPEPVINLAIEPKTRSDQDKMTEGLQKLAEEDPTFKVKFDDETGQTVIYGMGELHLDVLVSRLLSEFKVNASVGKPRVAYREAITAHAKAQGKFVRQSGGRGQYGDVTIEVEPRERGAGYEFVDNVKGGAVPRNFLMAAEAGIRETLETGVYAGYPMVDVKVTAVDGSYHDVDSNENAFKMAGSMAIKAAVAKAKPILLEPIMKLEAVTPEEYMGDVIGDFNSRRGQIISVEPNPETTVITGNVPLAESFGYTTDLRSVTKGRATFSMEFESYREMPGELANQVVEAAGKK.

The 275-residue stretch at 9–283 (ERVRNIGIIA…AVCDYLPSPV (275 aa)) folds into the tr-type G domain. Residues 18–25 (AHIDAGKT), 82–86 (DTPGH), and 136–139 (NKMD) contribute to the GTP site.

This sequence belongs to the TRAFAC class translation factor GTPase superfamily. Classic translation factor GTPase family. EF-G/EF-2 subfamily.

It is found in the cytoplasm. Its function is as follows. Catalyzes the GTP-dependent ribosomal translocation step during translation elongation. During this step, the ribosome changes from the pre-translocational (PRE) to the post-translocational (POST) state as the newly formed A-site-bound peptidyl-tRNA and P-site-bound deacylated tRNA move to the P and E sites, respectively. Catalyzes the coordinated movement of the two tRNA molecules, the mRNA and conformational changes in the ribosome. This Dehalococcoides mccartyi (strain ATCC BAA-2266 / KCTC 15142 / 195) (Dehalococcoides ethenogenes (strain 195)) protein is Elongation factor G.